The sequence spans 227 residues: Cytidylate kinase (227 aa).

12–20 (GPSGAGKGT) is an ATP binding site.

This sequence belongs to the cytidylate kinase family. Type 1 subfamily.

It is found in the cytoplasm. It carries out the reaction CMP + ATP = CDP + ADP. It catalyses the reaction dCMP + ATP = dCDP + ADP. This chain is Cytidylate kinase, found in Xanthomonas axonopodis pv. citri (strain 306).